We begin with the raw amino-acid sequence, 93 residues long: Ribonuclease P protein component 4 (93 aa).

Zn(2+) is bound by residues cysteine 55, cysteine 58, cysteine 81, and cysteine 83.

It belongs to the eukaryotic/archaeal RNase P protein component 4 family. In terms of assembly, consists of a catalytic RNA component and at least 4-5 protein subunits. Zn(2+) serves as cofactor.

Its subcellular location is the cytoplasm. It catalyses the reaction Endonucleolytic cleavage of RNA, removing 5'-extranucleotides from tRNA precursor.. Functionally, part of ribonuclease P, a protein complex that generates mature tRNA molecules by cleaving their 5'-ends. The polypeptide is Ribonuclease P protein component 4 (Halobacterium salinarum (strain ATCC 29341 / DSM 671 / R1)).